A 338-amino-acid chain; its full sequence is Protein-glutamate methylesterase/protein-glutamine glutaminase 2 (338 aa).

The region spanning 2–119 (RIGIVNDSAL…SDTKLAAGPL (118 aa)) is the Response regulatory domain. A 4-aspartylphosphate modification is found at Asp-53. Positions 145-330 (PTPTAPRLVA…PLQKIAPRLV (186 aa)) constitute a CheB-type methylesterase domain. Active-site residues include Ser-158, His-185, and Asp-278.

Belongs to the CheB family. Phosphorylated by CheA. Phosphorylation of the N-terminal regulatory domain activates the methylesterase activity.

It localises to the cytoplasm. It carries out the reaction [protein]-L-glutamate 5-O-methyl ester + H2O = L-glutamyl-[protein] + methanol + H(+). It catalyses the reaction L-glutaminyl-[protein] + H2O = L-glutamyl-[protein] + NH4(+). In terms of biological role, involved in chemotaxis. Part of a chemotaxis signal transduction system that modulates chemotaxis in response to various stimuli. Catalyzes the demethylation of specific methylglutamate residues introduced into the chemoreceptors (methyl-accepting chemotaxis proteins or MCP) by CheR. Also mediates the irreversible deamidation of specific glutamine residues to glutamic acid. This chain is Protein-glutamate methylesterase/protein-glutamine glutaminase 2, found in Cupriavidus metallidurans (strain ATCC 43123 / DSM 2839 / NBRC 102507 / CH34) (Ralstonia metallidurans).